We begin with the raw amino-acid sequence, 202 residues long: dTTP/UTP pyrophosphatase (202 aa).

The active-site Proton acceptor is the Asp76.

The protein belongs to the Maf family. YhdE subfamily. A divalent metal cation is required as a cofactor.

It is found in the cytoplasm. The catalysed reaction is dTTP + H2O = dTMP + diphosphate + H(+). The enzyme catalyses UTP + H2O = UMP + diphosphate + H(+). Functionally, nucleoside triphosphate pyrophosphatase that hydrolyzes dTTP and UTP. May have a dual role in cell division arrest and in preventing the incorporation of modified nucleotides into cellular nucleic acids. This Neisseria gonorrhoeae (strain ATCC 700825 / FA 1090) protein is dTTP/UTP pyrophosphatase.